A 134-amino-acid chain; its full sequence is D-ribose pyranase (134 aa).

H20 serves as the catalytic Proton donor. Residues D28, H101, and 123–125 (YCN) each bind substrate.

This sequence belongs to the RbsD / FucU family. RbsD subfamily. Homodecamer.

Its subcellular location is the cytoplasm. The catalysed reaction is beta-D-ribopyranose = beta-D-ribofuranose. It participates in carbohydrate metabolism; D-ribose degradation; D-ribose 5-phosphate from beta-D-ribopyranose: step 1/2. Catalyzes the interconversion of beta-pyran and beta-furan forms of D-ribose. The polypeptide is D-ribose pyranase (Pseudomonas fluorescens (strain ATCC BAA-477 / NRRL B-23932 / Pf-5)).